Consider the following 286-residue polypeptide: 4-hydroxybenzoate octaprenyltransferase (286 aa).

A run of 7 helical transmembrane segments spans residues 21–40 (GTLL…AGGM), 95–115 (ILFV…NGLV), 142–162 (FLGV…TGEV), 167–187 (WWLF…YAMV), 211–231 (IIGL…WSAE), 235–255 (LYGL…MLIF), and 266–286 (FLNN…DYLI).

Belongs to the UbiA prenyltransferase family. Mg(2+) serves as cofactor.

Its subcellular location is the cell inner membrane. It carries out the reaction all-trans-octaprenyl diphosphate + 4-hydroxybenzoate = 4-hydroxy-3-(all-trans-octaprenyl)benzoate + diphosphate. It participates in cofactor biosynthesis; ubiquinone biosynthesis. Catalyzes the prenylation of para-hydroxybenzoate (PHB) with an all-trans polyprenyl group. Mediates the second step in the final reaction sequence of ubiquinone-8 (UQ-8) biosynthesis, which is the condensation of the polyisoprenoid side chain with PHB, generating the first membrane-bound Q intermediate 3-octaprenyl-4-hydroxybenzoate. The sequence is that of 4-hydroxybenzoate octaprenyltransferase from Shewanella putrefaciens (strain CN-32 / ATCC BAA-453).